A 163-amino-acid polypeptide reads, in one-letter code: Periplasmic nitrate reductase, electron transfer subunit (163 aa).

The signal sequence occupies residues 1-32 (MRSQDPSRRLSRRLWTLFALALCLVTGTVALA). 8 residues coordinate heme c: His76, Cys90, Cys93, His94, His111, Cys130, Cys133, and His134.

The protein belongs to the NapB family. In terms of assembly, component of the periplasmic nitrate reductase NapAB complex composed of NapA and NapB. Binds 2 heme C groups per subunit.

Its subcellular location is the periplasm. Its function is as follows. Electron transfer subunit of the periplasmic nitrate reductase complex NapAB. Receives electrons from the membrane-anchored tetraheme c-type NapC protein and transfers these to NapA subunit, thus allowing electron flow between membrane and periplasm. Essential for periplasmic nitrate reduction with nitrate as the terminal electron acceptor. The sequence is that of Periplasmic nitrate reductase, electron transfer subunit from Neorhizobium galegae (Rhizobium galegae).